A 414-amino-acid chain; its full sequence is Tyrosine--tRNA ligase (414 aa).

Tyrosine 38 is a binding site for L-tyrosine. The short motif at 43 to 52 (CTARSLHIGS) is the 'HIGH' region element. 2 residues coordinate L-tyrosine: tyrosine 172 and glutamine 176. A 'KMSKS' region motif is present at residues 232–236 (KMGKT). An ATP-binding site is contributed by lysine 235. An S4 RNA-binding domain is found at 345-412 (ISVAKLLQLA…GKKRRIKVVV (68 aa)).

The protein belongs to the class-I aminoacyl-tRNA synthetase family. TyrS type 1 subfamily. Homodimer.

It localises to the cytoplasm. It catalyses the reaction tRNA(Tyr) + L-tyrosine + ATP = L-tyrosyl-tRNA(Tyr) + AMP + diphosphate + H(+). In terms of biological role, catalyzes the attachment of tyrosine to tRNA(Tyr) in a two-step reaction: tyrosine is first activated by ATP to form Tyr-AMP and then transferred to the acceptor end of tRNA(Tyr). In Anaplasma marginale (strain St. Maries), this protein is Tyrosine--tRNA ligase.